The chain runs to 251 residues: Triosephosphate isomerase (251 aa).

Asn-9 to Lys-11 serves as a coordination point for substrate. The Electrophile role is filled by His-95. Residue Glu-167 is the Proton acceptor of the active site. Residues Gly-173, Ser-212, and Gly-233–Gly-234 each bind substrate.

Belongs to the triosephosphate isomerase family. In terms of assembly, homodimer.

It is found in the cytoplasm. The catalysed reaction is D-glyceraldehyde 3-phosphate = dihydroxyacetone phosphate. It functions in the pathway carbohydrate biosynthesis; gluconeogenesis. Its pathway is carbohydrate degradation; glycolysis; D-glyceraldehyde 3-phosphate from glycerone phosphate: step 1/1. In terms of biological role, involved in the gluconeogenesis. Catalyzes stereospecifically the conversion of dihydroxyacetone phosphate (DHAP) to D-glyceraldehyde-3-phosphate (G3P). In Pseudomonas entomophila (strain L48), this protein is Triosephosphate isomerase.